The primary structure comprises 207 residues: LexA repressor (207 aa).

The H-T-H motif DNA-binding region spans 28 to 48 (RAEISRELGFKSANAAEEHLK). Residues S123 and K160 each act as for autocatalytic cleavage activity in the active site.

Belongs to the peptidase S24 family. As to quaternary structure, homodimer.

The catalysed reaction is Hydrolysis of Ala-|-Gly bond in repressor LexA.. In terms of biological role, represses a number of genes involved in the response to DNA damage (SOS response), including recA and lexA. In the presence of single-stranded DNA, RecA interacts with LexA causing an autocatalytic cleavage which disrupts the DNA-binding part of LexA, leading to derepression of the SOS regulon and eventually DNA repair. This is LexA repressor from Haemophilus influenzae (strain 86-028NP).